The primary structure comprises 524 residues: MKPQELAKEVAKRRTFAIISHPDAGKTTITEQLLLFGGVIREAGTVKGRKSGHFAKSDWMEIEKKRGISVTSSVMQFNYQGKRINILDTPGHEDFSEDTYRTLMAVDAAVMVIDSAKGIEAQTKKLFKVVKQRGIPIFTFMNKLDRDGREPLDLIAELEDLLGIEGYAMNWPIGMGKGLKGLYDRVNQRIELYRREGDDRFLPLNDQGQLDPSQPLTQDSIYTQTLDDIELLNDAGNQFNLKKIMAGEQTPVFFGSALTNFGVETFLNSFVQYAPEPGPKKTEQGGEVNPTNPELSAFVFKIQANMNPAHRDRIAFVRIVSGEFERGMDVILHRTGKTMRLNNSTEFMADTRETVSTAVAGDIVGLYDTGNFQIGDTIYQGKEPIQFEKLPQFTPELFVRVTPKNVMKQKSFHKGMQQLVQEGAVQLYKTYNTNDYILGAVGQLQFEVFQFRMLHEYHSEVIMTPIGSRTARWINPDQLDEKMSSSRNLLVQDIHGDPLFLFENQYAERWFADKYPDVKLTAKM.

Positions 11–278 (AKRRTFAIIS…SFVQYAPEPG (268 aa)) constitute a tr-type G domain. GTP-binding positions include 20 to 27 (SHPDAGKT), 88 to 92 (DTPGH), and 142 to 145 (NKLD).

This sequence belongs to the TRAFAC class translation factor GTPase superfamily. Classic translation factor GTPase family. PrfC subfamily.

Its subcellular location is the cytoplasm. Increases the formation of ribosomal termination complexes and stimulates activities of RF-1 and RF-2. It binds guanine nucleotides and has strong preference for UGA stop codons. It may interact directly with the ribosome. The stimulation of RF-1 and RF-2 is significantly reduced by GTP and GDP, but not by GMP. The polypeptide is Peptide chain release factor 3 (Lacticaseibacillus paracasei (strain ATCC 334 / BCRC 17002 / CCUG 31169 / CIP 107868 / KCTC 3260 / NRRL B-441) (Lactobacillus paracasei)).